The chain runs to 127 residues: MASRQPSEGSTVLISLILWVIIFALLNIGSNFFRSSEGATILGGFVGSFLFFLQMTFIGAIKRDVKLLETVLAVIITAMISSSVHRVSGTTSIIFSIGWIFYLNHASTKIYSKLEETNTVVSGKKRK.

Helical transmembrane passes span 13-33 (LISL…SNFF), 41-61 (ILGG…IGAI), 65-85 (VKLL…SSVH), and 87-107 (VSGT…NHAS).

The protein belongs to the KRTCAP2 family. As to quaternary structure, component of the oligosaccharyltransferase (OST) complex.

The protein localises to the membrane. Its function is as follows. Subunit of the oligosaccharyl transferase (OST) complex that catalyzes the initial transfer of a defined glycan (Glc(3)Man(9)GlcNAc(2) in eukaryotes) from the lipid carrier dolichol-pyrophosphate to an asparagine residue within an Asn-X-Ser/Thr consensus motif in nascent polypeptide chains, the first step in protein N-glycosylation. N-glycosylation occurs cotranslationally and the complex associates with the Sec61 complex at the channel-forming translocon complex that mediates protein translocation across the endoplasmic reticulum (ER). All subunits are required for a maximal enzyme activity. The polypeptide is Protein KRTCAP2 homolog (Dictyostelium discoideum (Social amoeba)).